Here is a 44-residue protein sequence, read N- to C-terminus: Iota-conotoxin-like R11.11 (44 aa).

4 cysteine pairs are disulfide-bonded: Cys-5/Cys-19, Cys-12/Cys-22, Cys-18/Cys-27, and Cys-21/Cys-36. Residue Arg-44 is a propeptide, removed by a carboxypeptidase.

It belongs to the conotoxin I1 superfamily. Expressed by the venom duct.

Its subcellular location is the secreted. Its function is as follows. Iota-conotoxins bind to voltage-gated sodium channels (Nav) and act as agonists by shifting the voltage-dependence of activation to more hyperpolarized levels. Produces general excitatory symptoms. This is Iota-conotoxin-like R11.11 from Conus radiatus (Rayed cone).